The chain runs to 498 residues: Tyrosine 3-monooxygenase (498 aa).

The span at 1–10 (MPTPSASSPQ) shows a compositional bias: polar residues. Residues 1 to 33 (MPTPSASSPQPKGFRRAVSEQDTKQAEAVTSPR) are disordered. Phosphoserine is present on residues serine 19 and serine 31. Position 40 is a phosphoserine; by CaMK2 and PKA (serine 40). Histidine 331, histidine 336, and glutamate 376 together coordinate Fe cation. At serine 472 the chain carries Phosphoserine.

Belongs to the biopterin-dependent aromatic amino acid hydroxylase family. As to quaternary structure, homotetramer. Interacts (when phosphorylated at Ser-19) with YWHAG; one YWHAG dimer bounds to one TH tetramer and this interaction may influence the phosphorylation and dephosphorylation of other sites. Interacts with NT5DC2; the interaction results in reduced phosphorylation and decreased catalytic activity of TH. Fe(2+) is required as a cofactor. Phosphorylated on Ser-19, Ser-31 and Ser-40 by several protein kinases with different site specificities. Phosphorylation at Ser-31 and Ser-40 leads to an increase of TH activity. Phosphorylation at Ser-40 activates the enzyme and also counteracts the feedback inhibition of TH by catecholamines. Phosphorylation of Ser-19 and Ser-31 triggers the proteasomal degradation of TH through the ubiquitin-proteasome pathway. Phosphorylation at Ser-31 facilitates transport of TH from the soma to the nerve terminals via the microtubule network. Phosphorylation at Ser-19 induces the high-affinity binding to the 14-3-3 protein YWHAG; this interaction may influence the phosphorylation and dephosphorylation of other sites. Ser-19 increases the phosphorylation at Ser-40 in a hierarchical manner, leading to increased activity. In terms of tissue distribution, expressed in the adrenal gland. Expressed in the retina. Expressed in the in the striatum (at protein level).

It localises to the cytoplasm. It is found in the perinuclear region. The protein localises to the nucleus. Its subcellular location is the cell projection. The protein resides in the axon. It localises to the cytoplasmic vesicle. It is found in the secretory vesicle. The protein localises to the synaptic vesicle. The enzyme catalyses (6R)-L-erythro-5,6,7,8-tetrahydrobiopterin + L-tyrosine + O2 = (4aS,6R)-4a-hydroxy-L-erythro-5,6,7,8-tetrahydrobiopterin + L-dopa. Its pathway is catecholamine biosynthesis; dopamine biosynthesis; dopamine from L-tyrosine: step 1/2. Inhibited in feedback fashion by the catecholamine neurotransmitters, especially by dopamine in competition with tetrahydrobiopterin. Phosphorylation of several Ser/Thr residues in the N-terminus regulates the catalytic activity. Ser-31 and Ser-40 are readily phosphorylated to activate the catalytic activity. A Cysteine modification induced by N-ethylmaleimide (NEM), inhibits tyrosine 3-monooxygenase activity through the modification of the Cys-177. Its function is as follows. Catalyzes the conversion of L-tyrosine to L-dihydroxyphenylalanine (L-Dopa), the rate-limiting step in the biosynthesis of catecholamines, dopamine, noradrenaline, and adrenaline. Uses tetrahydrobiopterin and molecular oxygen to convert tyrosine to L-Dopa. In addition to tyrosine, is able to catalyze the hydroxylation of phenylalanine and tryptophan with lower specificity. Positively regulates the regression of retinal hyaloid vessels during postnatal development. The polypeptide is Tyrosine 3-monooxygenase (Th) (Mus musculus (Mouse)).